The primary structure comprises 387 residues: Leucine aminopeptidase 1 (387 aa).

The first 18 residues, 1-18 (MKIRAALALSATASGVLA), serve as a signal peptide directing secretion. A propeptide spanning residues 19 to 87 (AVVPQQALLN…YPTLHQASNV (69 aa)) is cleaved from the precursor. Asn-179 carries an N-linked (GlcNAc...) asparagine glycan. The Zn(2+) site is built by His-187, Asp-206, Glu-245, and Asp-272. Cys-321 and Cys-325 are joined by a disulfide. Residue His-354 participates in Zn(2+) binding.

This sequence belongs to the peptidase M28 family. M28E subfamily. Monomer. It depends on Zn(2+) as a cofactor.

It is found in the secreted. In terms of biological role, extracellular aminopeptidase that allows assimilation of proteinaceous substrates. This is Leucine aminopeptidase 1 (lap1) from Aspergillus oryzae (strain ATCC 42149 / RIB 40) (Yellow koji mold).